Here is a 211-residue protein sequence, read N- to C-terminus: Eukaryotic translation initiation factor 4E (211 aa).

This sequence belongs to the eukaryotic initiation factor 4E family. EIF4F is a multi-subunit complex, the composition of which varies with external and internal environmental conditions. It is composed of at least eIF4A, eIF4E and eIF4G. eIF4E is also known to interact with other partners.

In terms of biological role, recognizes and binds the 7-methylguanosine-containing mRNA cap during an early step in the initiation of protein synthesis and facilitates ribosome binding by inducing the unwinding of the mRNAs secondary structures. The sequence is that of Eukaryotic translation initiation factor 4E (TIF45) from Eremothecium gossypii (strain ATCC 10895 / CBS 109.51 / FGSC 9923 / NRRL Y-1056) (Yeast).